We begin with the raw amino-acid sequence, 418 residues long: MSTLEEVLREAYKLVTPSEEEERELKKVTEKVKALIADAINKYGIEAEIGVYGSSARSTWLPGQRDIDIFIVLTNRNINIKDVITLLSRYFSERGVTWSMRYAQHPYLSLLVDGYEVDVVPCYKISFGERPITAADRTPLHHKFLVEKLSEEQRRDVRLLKLFMKTIGVYGAEIKVEGFSGYLTELLVAYYGSFIDVLKAASRWRPYRTYITFSESRAKFKAPLVVVDPVDPERNVAAAVSLTSMSTFILASRRFLKNPSITYFQQRQGAVIKTNVVEVVFPYPNEPPDIVWGRYKRIGRSVFNWLKQCGFRVYRWGVESDEKSYVSLIYVVEQIELPPYMLHRGPPVYDGAVDAFVEKYLDKDIIGPFVQGSRVYVIKRRRYTNISDCLKTYLGKGDYTIRINLYEGALVRKNAWIT.

ATP contacts are provided by Ser-54 and Arg-57. 2 residues coordinate CTP: Ser-54 and Arg-57. Positions 66, 68, and 118 each coordinate Mg(2+). His-141, Lys-161, and Tyr-170 together coordinate ATP. 3 residues coordinate CTP: His-141, Lys-161, and Tyr-170.

Belongs to the tRNA nucleotidyltransferase/poly(A) polymerase family. Archaeal CCA-adding enzyme subfamily. Homodimer. Requires Mg(2+) as cofactor.

It catalyses the reaction a tRNA precursor + 2 CTP + ATP = a tRNA with a 3' CCA end + 3 diphosphate. The catalysed reaction is a tRNA with a 3' CCA end + 2 CTP + ATP = a tRNA with a 3' CCACCA end + 3 diphosphate. In terms of biological role, catalyzes the addition and repair of the essential 3'-terminal CCA sequence in tRNAs without using a nucleic acid template. Adds these three nucleotides in the order of C, C, and A to the tRNA nucleotide-73, using CTP and ATP as substrates and producing inorganic pyrophosphate. tRNA 3'-terminal CCA addition is required both for tRNA processing and repair. Also involved in tRNA surveillance by mediating tandem CCA addition to generate a CCACCA at the 3' terminus of unstable tRNAs. While stable tRNAs receive only 3'-terminal CCA, unstable tRNAs are marked with CCACCA and rapidly degraded. In Pyrobaculum islandicum (strain DSM 4184 / JCM 9189 / GEO3), this protein is CCA-adding enzyme.